We begin with the raw amino-acid sequence, 349 residues long: 5-deoxyribose 1-phosphate isomerase (349 aa).

Residues 49–51 (RGA), arginine 92, and glutamine 199 each bind substrate. Residue aspartate 240 is the Proton donor of the active site. 250–251 (NK) is a substrate binding site.

It belongs to the EIF-2B alpha/beta/delta subunits family. DrdI subfamily.

The catalysed reaction is 5-deoxy-alpha-D-ribose 1-phosphate = 5-deoxy-D-ribulose 1-phosphate. The protein operates within carbohydrate degradation. Catalyzes the isomerization of 5-deoxy-alpha-D-ribose 1-phosphate to 5-deoxy-D-ribulose 1-phosphate, as part of a 5-deoxyribose salvage pathway that recycles this toxic radical SAM enzyme by-product to mainstream metabolites. The sequence is that of 5-deoxyribose 1-phosphate isomerase from Clostridium botulinum (strain Langeland / NCTC 10281 / Type F).